The sequence spans 197 residues: Imidazoleglycerol-phosphate dehydratase (197 aa).

Belongs to the imidazoleglycerol-phosphate dehydratase family.

Its subcellular location is the cytoplasm. The catalysed reaction is D-erythro-1-(imidazol-4-yl)glycerol 3-phosphate = 3-(imidazol-4-yl)-2-oxopropyl phosphate + H2O. Its pathway is amino-acid biosynthesis; L-histidine biosynthesis; L-histidine from 5-phospho-alpha-D-ribose 1-diphosphate: step 6/9. The protein is Imidazoleglycerol-phosphate dehydratase of Rhodopseudomonas palustris (strain TIE-1).